The following is a 365-amino-acid chain: Peptide chain release factor 2 (365 aa).

N5-methylglutamine is present on Gln252.

The protein belongs to the prokaryotic/mitochondrial release factor family. Methylated by PrmC. Methylation increases the termination efficiency of RF2.

The protein localises to the cytoplasm. In terms of biological role, peptide chain release factor 2 directs the termination of translation in response to the peptide chain termination codons UGA and UAA. This chain is Peptide chain release factor 2 (prfB), found in Haemophilus influenzae (strain ATCC 51907 / DSM 11121 / KW20 / Rd).